The chain runs to 210 residues: Thiamine-phosphate synthase (210 aa).

Residues 39 to 43 and asparagine 71 each bind 4-amino-2-methyl-5-(diphosphooxymethyl)pyrimidine; that span reads QLREK. Positions 72 and 91 each coordinate Mg(2+). Serine 110 lines the 4-amino-2-methyl-5-(diphosphooxymethyl)pyrimidine pocket. 2-[(2R,5Z)-2-carboxy-4-methylthiazol-5(2H)-ylidene]ethyl phosphate is bound at residue 134–136; sequence TPT. Lysine 137 serves as a coordination point for 4-amino-2-methyl-5-(diphosphooxymethyl)pyrimidine. Residue glycine 163 participates in 2-[(2R,5Z)-2-carboxy-4-methylthiazol-5(2H)-ylidene]ethyl phosphate binding.

Belongs to the thiamine-phosphate synthase family. Requires Mg(2+) as cofactor.

It catalyses the reaction 2-[(2R,5Z)-2-carboxy-4-methylthiazol-5(2H)-ylidene]ethyl phosphate + 4-amino-2-methyl-5-(diphosphooxymethyl)pyrimidine + 2 H(+) = thiamine phosphate + CO2 + diphosphate. The catalysed reaction is 2-(2-carboxy-4-methylthiazol-5-yl)ethyl phosphate + 4-amino-2-methyl-5-(diphosphooxymethyl)pyrimidine + 2 H(+) = thiamine phosphate + CO2 + diphosphate. The enzyme catalyses 4-methyl-5-(2-phosphooxyethyl)-thiazole + 4-amino-2-methyl-5-(diphosphooxymethyl)pyrimidine + H(+) = thiamine phosphate + diphosphate. It functions in the pathway cofactor biosynthesis; thiamine diphosphate biosynthesis; thiamine phosphate from 4-amino-2-methyl-5-diphosphomethylpyrimidine and 4-methyl-5-(2-phosphoethyl)-thiazole: step 1/1. In terms of biological role, condenses 4-methyl-5-(beta-hydroxyethyl)thiazole monophosphate (THZ-P) and 2-methyl-4-amino-5-hydroxymethyl pyrimidine pyrophosphate (HMP-PP) to form thiamine monophosphate (TMP). In Campylobacter jejuni (strain RM1221), this protein is Thiamine-phosphate synthase.